We begin with the raw amino-acid sequence, 467 residues long: Glutamate--tRNA ligase (467 aa).

The 'HIGH' region motif lies at 14–24 (PSPTGFLHLGG). Basic and acidic residues predominate over residues 124-134 (PRYDGTWRPEP). The interval 124–156 (PRYDGTWRPEPGKTLPPVPAGRKPVVRFKNPQD) is disordered. The short motif at 246 to 250 (KLSKR) is the 'KMSKS' region element. Lys249 lines the ATP pocket.

The protein belongs to the class-I aminoacyl-tRNA synthetase family. Glutamate--tRNA ligase type 1 subfamily. Monomer.

The protein resides in the cytoplasm. The catalysed reaction is tRNA(Glu) + L-glutamate + ATP = L-glutamyl-tRNA(Glu) + AMP + diphosphate. In terms of biological role, catalyzes the attachment of glutamate to tRNA(Glu) in a two-step reaction: glutamate is first activated by ATP to form Glu-AMP and then transferred to the acceptor end of tRNA(Glu). This is Glutamate--tRNA ligase from Bordetella petrii (strain ATCC BAA-461 / DSM 12804 / CCUG 43448).